The primary structure comprises 117 residues: Ribonuclease P protein component (117 aa).

Belongs to the RnpA family. Consists of a catalytic RNA component (M1 or rnpB) and a protein subunit.

The catalysed reaction is Endonucleolytic cleavage of RNA, removing 5'-extranucleotides from tRNA precursor.. In terms of biological role, RNaseP catalyzes the removal of the 5'-leader sequence from pre-tRNA to produce the mature 5'-terminus. It can also cleave other RNA substrates such as 4.5S RNA. The protein component plays an auxiliary but essential role in vivo by binding to the 5'-leader sequence and broadening the substrate specificity of the ribozyme. The chain is Ribonuclease P protein component from Desulforapulum autotrophicum (strain ATCC 43914 / DSM 3382 / VKM B-1955 / HRM2) (Desulfobacterium autotrophicum).